A 604-amino-acid chain; its full sequence is Elongation factor 4 (604 aa).

The tr-type G domain maps to 10–191 (KNIRNFSIIA…KIITTIPAPS (182 aa)). Residues 22–27 (DHGKST) and 138–141 (NKID) contribute to the GTP site.

It belongs to the TRAFAC class translation factor GTPase superfamily. Classic translation factor GTPase family. LepA subfamily.

It localises to the cell inner membrane. The enzyme catalyses GTP + H2O = GDP + phosphate + H(+). Functionally, required for accurate and efficient protein synthesis under certain stress conditions. May act as a fidelity factor of the translation reaction, by catalyzing a one-codon backward translocation of tRNAs on improperly translocated ribosomes. Back-translocation proceeds from a post-translocation (POST) complex to a pre-translocation (PRE) complex, thus giving elongation factor G a second chance to translocate the tRNAs correctly. Binds to ribosomes in a GTP-dependent manner. The protein is Elongation factor 4 of Helicobacter acinonychis (strain Sheeba).